The following is a 244-amino-acid chain: MLINFTQVLQDSWNFFRNQKKIMLQFVAILFIVQSASALLSFSVNDENKNDVLNLANTDITSFIFSVAITQILTSFIAAWGLTSIHKISLQNYRTLGETFSLTLRRFAGVILLDLLMVAPMLLGLGEAFAALLTKKSPSIMSLIAMLVGVWFFVRLNLTVVHYLSTQEALSQTIRKIWMRGNTRKGVLFIYTLLVYFLVPILIFQLSAFSNNAVFDMVIGIFTALLNIFMLVVTYRFYSLFMKD.

The next 6 membrane-spanning stretches (helical) occupy residues Ile-22–Phe-42, Phe-63–Thr-83, Val-110–Ala-130, Ile-140–Val-160, Gly-186–Leu-206, and Ala-213–Val-233.

It is found in the cell membrane. This is an uncharacterized protein from Haemophilus influenzae (strain ATCC 51907 / DSM 11121 / KW20 / Rd).